The following is a 215-amino-acid chain: Ribonuclease (215 aa).

A signal peptide spans 1-22 (MKKIVVLLGMLLAPWFSSAVQA). Residues His-62, Glu-102, and His-106 contribute to the active site. Residues 144-166 (KPLPAQGGSGQCQRLAGPGQHHG) are disordered.

It belongs to the RNase T2 family.

The protein localises to the periplasm. It localises to the cytoplasm. In terms of biological role, one of the few RNases that cleave the phosphodiester bond between any two nucleotide. Shows a preference for adenylic acid. The polypeptide is Ribonuclease (Aeromonas hydrophila).